Here is a 62-residue protein sequence, read N- to C-terminus: UPF0337 protein gsr0040 (62 aa).

Basic and acidic residues-rich tracts occupy residues 1–15 (MGID…KDVQ) and 27–62 (DDPK…IDNV). The segment at 1–62 (MGIDKRAEAT…DQAHRTIDNV (62 aa)) is disordered.

This sequence belongs to the UPF0337 (CsbD) family.

This Gloeobacter violaceus (strain ATCC 29082 / PCC 7421) protein is UPF0337 protein gsr0040.